A 250-amino-acid chain; its full sequence is Probable aquaporin TIP-type (250 aa).

2 consecutive transmembrane segments (helical) span residues 22–42 and 56–76; these read AGLA…GSGI and AGLI…VSVG. The short motif at 85-87 is the NPA 1 element; the sequence is NPA. 3 consecutive transmembrane segments (helical) span residues 104–124, 138–158, and 170–190; these read IVYI…LVFV, VGVG…VYTV, and IGII…LVGG. An NPA 2 motif is present at residues 198 to 200; it reads NPA. The helical transmembrane segment at 218–238 threads the bilayer; the sequence is YWAGPLIGGGIAGLVYEVLFI.

The protein belongs to the MIP/aquaporin (TC 1.A.8) family. TIP (TC 1.A.8.10) subfamily.

Its subcellular location is the membrane. Its function is as follows. Aquaporins facilitate the transport of water and small neutral solutes across cell membranes. May have a role in buffering osmotic fluctations in the highly compartmented vacuole of arbuscule cells. This is Probable aquaporin TIP-type (AQP1) from Medicago truncatula (Barrel medic).